A 289-amino-acid polypeptide reads, in one-letter code: S-methyl-5'-thioadenosine phosphorylase (289 aa).

Phosphate contacts are provided by residues Ser11, 53–54, and 86–87; these read RH and SA. Met187 lines the substrate pocket. Position 188 (Thr188) interacts with phosphate. Substrate is bound at residue 211 to 213; sequence DYD.

It belongs to the PNP/MTAP phosphorylase family. MTAP subfamily. In terms of assembly, homohexamer. Dimer of a homotrimer.

The enzyme catalyses S-methyl-5'-thioadenosine + phosphate = 5-(methylsulfanyl)-alpha-D-ribose 1-phosphate + adenine. The protein operates within amino-acid biosynthesis; L-methionine biosynthesis via salvage pathway; S-methyl-5-thio-alpha-D-ribose 1-phosphate from S-methyl-5'-thioadenosine (phosphorylase route): step 1/1. Its function is as follows. Catalyzes the reversible phosphorylation of S-methyl-5'-thioadenosine (MTA) to adenine and 5-methylthioribose-1-phosphate. Involved in the breakdown of MTA, a major by-product of polyamine biosynthesis. Responsible for the first step in the methionine salvage pathway after MTA has been generated from S-adenosylmethionine. Has broad substrate specificity with 6-aminopurine nucleosides as preferred substrates. This is S-methyl-5'-thioadenosine phosphorylase from Thermosynechococcus vestitus (strain NIES-2133 / IAM M-273 / BP-1).